The chain runs to 327 residues: Phosphate acyltransferase (327 aa).

The protein belongs to the PlsX family. Homodimer. Probably interacts with PlsY.

Its subcellular location is the cytoplasm. It carries out the reaction a fatty acyl-[ACP] + phosphate = an acyl phosphate + holo-[ACP]. It functions in the pathway lipid metabolism; phospholipid metabolism. In terms of biological role, catalyzes the reversible formation of acyl-phosphate (acyl-PO(4)) from acyl-[acyl-carrier-protein] (acyl-ACP). This enzyme utilizes acyl-ACP as fatty acyl donor, but not acyl-CoA. This is Phosphate acyltransferase from Thermotoga maritima (strain ATCC 43589 / DSM 3109 / JCM 10099 / NBRC 100826 / MSB8).